The chain runs to 270 residues: Short chain dehydrogenase/reductase dpfgG (270 aa).

Isoleucine 18, aspartate 69, asparagine 96, lysine 130, lysine 171, isoleucine 200, and asparagine 204 together coordinate NADP(+). Lysine 171 acts as the Lowers pKa of active site Tyr in catalysis.

It belongs to the short-chain dehydrogenases/reductases (SDR) family.

It functions in the pathway secondary metabolite biosynthesis; terpenoid biosynthesis. Short chain dehydrogenase/reductase; part of the gene cluster that mediates the biosynthesis of diterpenoid pyrones. The first step of the pathway is the synthesis of the alpha-pyrone moiety by the polyketide synthase dpfgA via condensation of one acetyl-CoA starter unit with 3 malonyl-CoA units and 2 methylations. The alpha-pyrone is then combined with geranylgeranyl pyrophosphate (GGPP) formed by the GGPP synthase dpfgD through the action of the prenyltransferase dpfgC to yield a linear alpha-pyrone diterpenoid. Subsequent steps in the diterpenoid pyrone biosynthetic pathway involve the decalin core formation, which is initiated by the epoxidation of the C10-C11 olefin by the FAD-dependent oxidoreductase dpfgE, and is followed by a cyclization cascade catalyzed by the terpene cyclase dpfgB. The short chain dehydrogenase/reductase dpfgG then oxidizes the 8S hydroxy group to a ketone and the short chain dehydrogenase/reductase dpfgH reduces the ketone to the 8R hydroxy group to yield higginsianin B. Higginsianin B is further methylated by the methyltransferase dpfgI to produce the intermediate named FDDP B. The cytochrome P450 monooxygenase dfgpJ then catalyzes a three-step oxidation at C-27 to generate a carboxylic acid as well as C-26 hydroxylation. Finally, methyltransferase dpfgK methylates the carboxylic acid generated by dpfgJ, yielding the final diterpenoid pyrones from the pathway which were named FDDP D and FDDP E. The protein is Short chain dehydrogenase/reductase dpfgG of Gibberella zeae (strain ATCC MYA-4620 / CBS 123657 / FGSC 9075 / NRRL 31084 / PH-1) (Wheat head blight fungus).